Consider the following 64-residue polypeptide: uncharacterized protein (64 aa).

A signal peptide spans 1–26 (MVVKENFCGACLTIPLAFAGAGTAIG). A helical transmembrane segment spans residues 33 to 53 (IKKWSIVITIISLLLTVWFIY).

The protein belongs to the IIV-6 010R family.

It is found in the host membrane. This is an uncharacterized protein from Aedes vexans (Inland floodwater mosquito).